Reading from the N-terminus, the 133-residue chain is ATP synthase epsilon chain (133 aa).

The protein belongs to the ATPase epsilon chain family. As to quaternary structure, F-type ATPases have 2 components, CF(1) - the catalytic core - and CF(0) - the membrane proton channel. CF(1) has five subunits: alpha(3), beta(3), gamma(1), delta(1), epsilon(1). CF(0) has three main subunits: a, b and c.

It localises to the cell membrane. Functionally, produces ATP from ADP in the presence of a proton gradient across the membrane. In Halalkalibacterium halodurans (strain ATCC BAA-125 / DSM 18197 / FERM 7344 / JCM 9153 / C-125) (Bacillus halodurans), this protein is ATP synthase epsilon chain.